The sequence spans 225 residues: Proteasome activator 28 (225 aa).

It belongs to the PA28 family. In terms of assembly, homoheptamer. The homoheptamer associates with the 20S proteasome.

It is found in the nucleus. Functionally, subunit of the 11S REG (also called PA28) proteasome regulator, a doughnut-shaped homoheptamer which associates with the proteasome. 11S REG-gamma activates preferentially the trypsin-like catalytic subunit of the proteasome. May also be involved in cell cycle regulation. This is Proteasome activator 28 (psmE3) from Dictyostelium discoideum (Social amoeba).